The following is a 260-amino-acid chain: Aspartate/glutamate leucyltransferase (260 aa).

The protein belongs to the R-transferase family. Bpt subfamily.

The protein resides in the cytoplasm. The enzyme catalyses N-terminal L-glutamyl-[protein] + L-leucyl-tRNA(Leu) = N-terminal L-leucyl-L-glutamyl-[protein] + tRNA(Leu) + H(+). It catalyses the reaction N-terminal L-aspartyl-[protein] + L-leucyl-tRNA(Leu) = N-terminal L-leucyl-L-aspartyl-[protein] + tRNA(Leu) + H(+). Functionally, functions in the N-end rule pathway of protein degradation where it conjugates Leu from its aminoacyl-tRNA to the N-termini of proteins containing an N-terminal aspartate or glutamate. The protein is Aspartate/glutamate leucyltransferase of Sphingomonas elodea.